Here is a 378-residue protein sequence, read N- to C-terminus: Probable 3-hydroxyisobutyryl-CoA hydrolase 2 (378 aa).

Residues Gly-115, Glu-138, and Asp-146 each contribute to the substrate site. A Microbody targeting signal motif is present at residues Ala-376–Leu-378.

The protein belongs to the enoyl-CoA hydratase/isomerase family.

It is found in the peroxisome. It catalyses the reaction 3-hydroxy-2-methylpropanoyl-CoA + H2O = 3-hydroxy-2-methylpropanoate + CoA + H(+). Its pathway is amino-acid degradation; L-valine degradation. In terms of biological role, involved in valine catabolism. In Arabidopsis thaliana (Mouse-ear cress), this protein is Probable 3-hydroxyisobutyryl-CoA hydrolase 2.